A 518-amino-acid chain; its full sequence is Protein translocase subunit SecD (518 aa).

Transmembrane regions (helical) follow at residues 9 to 29 (IFLS…NFMQ), 361 to 381 (LIGF…LGLF), 384 to 404 (IALS…QATL), 406 to 426 (LPGI…NVLI), 452 to 474 (FATI…IFGV), and 486 to 506 (IGII…IDIW).

This sequence belongs to the SecD/SecF family. SecD subfamily. Forms a complex with SecF. Part of the essential Sec protein translocation apparatus which comprises SecA, SecYEG and auxiliary proteins SecDF-YajC and YidC.

The protein localises to the cell inner membrane. Functionally, part of the Sec protein translocase complex. Interacts with the SecYEG preprotein conducting channel. SecDF uses the proton motive force (PMF) to complete protein translocation after the ATP-dependent function of SecA. The protein is Protein translocase subunit SecD of Rickettsia conorii (strain ATCC VR-613 / Malish 7).